The sequence spans 358 residues: Probable arabinan endo-1,5-alpha-L-arabinosidase B (358 aa).

The first 16 residues, methionine 1–cysteine 16, serve as a signal peptide directing secretion. The active-site Proton acceptor is aspartate 39. Asparagine 194 is a glycosylation site (N-linked (GlcNAc...) asparagine). Positions histidine 202–serine 227 are disordered. Glutamate 233 (proton donor) is an active-site residue.

Belongs to the glycosyl hydrolase 43 family.

The protein resides in the secreted. The enzyme catalyses Endohydrolysis of (1-&gt;5)-alpha-arabinofuranosidic linkages in (1-&gt;5)-arabinans.. It functions in the pathway glycan metabolism; L-arabinan degradation. In terms of biological role, endo-1,5-alpha-L-arabinanase involved in degradation of pectin. Its preferred substrate is linear 1,5-alpha-L-arabinan. This Aspergillus flavus (strain ATCC 200026 / FGSC A1120 / IAM 13836 / NRRL 3357 / JCM 12722 / SRRC 167) protein is Probable arabinan endo-1,5-alpha-L-arabinosidase B (abnB).